The following is a 593-amino-acid chain: Chaperone protein DnaK (593 aa).

Residue threonine 181 is modified to Phosphothreonine; by autocatalysis.

The protein belongs to the heat shock protein 70 family.

Its function is as follows. Acts as a chaperone. This is Chaperone protein DnaK from Mycoplasmoides gallisepticum (strain R(low / passage 15 / clone 2)) (Mycoplasma gallisepticum).